Reading from the N-terminus, the 313-residue chain is D-alanine--D-alanine ligase (313 aa).

The ATP-grasp domain occupies 108 to 308 (KLVWQQTGVP…YSELVVKVLS (201 aa)). 138 to 193 (VAKLGLPLFVKPASEGSSVAVLKVKTADALPAALEEAATHDKIVIVEKSIEGGGEY) contributes to the ATP binding site. Mg(2+)-binding residues include aspartate 262, glutamate 275, and asparagine 277.

Belongs to the D-alanine--D-alanine ligase family. Mg(2+) serves as cofactor. Requires Mn(2+) as cofactor.

It is found in the cytoplasm. The catalysed reaction is 2 D-alanine + ATP = D-alanyl-D-alanine + ADP + phosphate + H(+). It participates in cell wall biogenesis; peptidoglycan biosynthesis. Functionally, cell wall formation. This is D-alanine--D-alanine ligase from Burkholderia cenocepacia (strain ATCC BAA-245 / DSM 16553 / LMG 16656 / NCTC 13227 / J2315 / CF5610) (Burkholderia cepacia (strain J2315)).